The chain runs to 419 residues: Serine hydroxymethyltransferase (419 aa).

Residues Leu121 and 125-127 (GHL) contribute to the (6S)-5,6,7,8-tetrahydrofolate site. Lys230 carries the N6-(pyridoxal phosphate)lysine modification. A (6S)-5,6,7,8-tetrahydrofolate-binding site is contributed by 355–357 (SPF).

This sequence belongs to the SHMT family. Homodimer. Requires pyridoxal 5'-phosphate as cofactor.

The protein resides in the cytoplasm. It carries out the reaction (6R)-5,10-methylene-5,6,7,8-tetrahydrofolate + glycine + H2O = (6S)-5,6,7,8-tetrahydrofolate + L-serine. It participates in one-carbon metabolism; tetrahydrofolate interconversion. It functions in the pathway amino-acid biosynthesis; glycine biosynthesis; glycine from L-serine: step 1/1. Its function is as follows. Catalyzes the reversible interconversion of serine and glycine with tetrahydrofolate (THF) serving as the one-carbon carrier. This reaction serves as the major source of one-carbon groups required for the biosynthesis of purines, thymidylate, methionine, and other important biomolecules. Also exhibits THF-independent aldolase activity toward beta-hydroxyamino acids, producing glycine and aldehydes, via a retro-aldol mechanism. The protein is Serine hydroxymethyltransferase of Streptococcus equi subsp. zooepidemicus (strain MGCS10565).